The primary structure comprises 334 residues: MSNMQFSRGFNPFVILFCLAVVAPIISADVAILRTDYYQKTCPDFHKIVREAVTTKQVQQPTTAAGTLRLFFHDCFLEGCDASVLIATNSFNKAERDDDLNDSLPGDAFDIVTRIKTALELSCPGVVSCADILAQATRDLVTMVGGPYFDVKLGRKDGFESKAHKVRGNVPMANQTVPDIHGIFKKNGFSLREMVALSGAHTIGFSHCKEFSDRLYGSRADKEINPRFAAALKDLCKNHTVDDTIAAFNDVMTPGKFDNMYFKNLKRGLGLLASDHILIKDNSTKPFVDLYATNETAFFEDFARAMEKLGTVGVKGDKDGEVRRRCDHFNNLNV.

A signal peptide spans 1-28 (MSNMQFSRGFNPFVILFCLAVVAPIISA). Disulfide bonds link Cys-42-Cys-123, Cys-75-Cys-80, Cys-129-Cys-326, and Cys-208-Cys-236. His-73 serves as the catalytic Proton acceptor. Asp-74, Gly-79, Asp-81, and Ser-83 together coordinate Ca(2+). Pro-171 is a binding site for substrate. N-linked (GlcNAc...) asparagine glycosylation occurs at Asn-174. A heme b-binding site is contributed by His-201. Thr-202 lines the Ca(2+) pocket. Residue Asn-238 is glycosylated (N-linked (GlcNAc...) asparagine). Positions 250, 253, and 258 each coordinate Ca(2+). 2 N-linked (GlcNAc...) asparagine glycosylation sites follow: Asn-282 and Asn-294.

It belongs to the peroxidase family. Classical plant (class III) peroxidase subfamily. The cofactor is heme b. Ca(2+) is required as a cofactor.

The protein localises to the secreted. It catalyses the reaction 2 a phenolic donor + H2O2 = 2 a phenolic radical donor + 2 H2O. Functionally, removal of H(2)O(2), oxidation of toxic reductants, biosynthesis and degradation of lignin, suberization, auxin catabolism, response to environmental stresses such as wounding, pathogen attack and oxidative stress. These functions might be dependent on each isozyme/isoform in each plant tissue. The sequence is that of Peroxidase 65 (PER65) from Arabidopsis thaliana (Mouse-ear cress).